Reading from the N-terminus, the 111-residue chain is Large ribosomal subunit protein uL22 (111 aa).

Belongs to the universal ribosomal protein uL22 family. As to quaternary structure, part of the 50S ribosomal subunit.

This protein binds specifically to 23S rRNA; its binding is stimulated by other ribosomal proteins, e.g. L4, L17, and L20. It is important during the early stages of 50S assembly. It makes multiple contacts with different domains of the 23S rRNA in the assembled 50S subunit and ribosome. In terms of biological role, the globular domain of the protein is located near the polypeptide exit tunnel on the outside of the subunit, while an extended beta-hairpin is found that lines the wall of the exit tunnel in the center of the 70S ribosome. The chain is Large ribosomal subunit protein uL22 from Acholeplasma laidlawii (strain PG-8A).